A 678-amino-acid polypeptide reads, in one-letter code: F-box/LRR-repeat protein 5 (678 aa).

Residues 1-159 (MAPFPDEVDL…IKKKVIAQHC (159 aa)) are hemerythrin-like. Fe(3+) is bound by residues His-15, His-57, Glu-58, Glu-61, His-80, His-126, and Glu-130. The 47-residue stretch at 202–248 (SSSISSLPPEVMLNIFTYLNPQDLCRCSQVNTEWAQLAKTGSLWRHL) folds into the F-box domain. Positions 285–308 (YQEWDEDADIDESEETGEEEDSSI) are disordered. Over residues 287–306 (EWDEDADIDESEETGEEEDS) the composition is skewed to acidic residues. 7 LRR repeats span residues 314–340 (EKEL…VLAY), 341–366 (SSAT…DLTQ), 367–392 (TDIS…DLSG), 393–420 (CDKI…RLLK), 566–594 (HSDI…SLSG), 595–622 (CHQI…NLSG), and 623–648 (CLNV…HFYY). The [2Fe-2S] cluster site is built by Cys-649, Cys-663, Cys-673, and Cys-674. Residues 655 to 678 (PHGATASGCQNLQCGFRMCCRSGE) form an LRR 8 repeat.

As to quaternary structure, part of a SCF (SKP1-cullin-F-box) protein ligase complex. It depends on [2Fe-2S] cluster as a cofactor. Ubiquitinated upon iron and oxygen depletion, leading to its degradation by the proteasome. Ubiquitination is regulated by the hemerythrin-like region that acts as an oxygen and iron sensor.

It is found in the cytoplasm. The protein localises to the perinuclear region. Its subcellular location is the nucleus. Its pathway is protein modification; protein ubiquitination. In terms of biological role, component of some SCF (SKP1-cullin-F-box) protein ligase complex that plays a central role in iron homeostasis by promoting the ubiquitination and subsequent degradation of ireb2/irp2. Upon high iron and oxygen level, it specifically recognizes and binds ireb2/irp2, promoting its ubiquitination and degradation by the proteasome. The chain is F-box/LRR-repeat protein 5 (fbxl5) from Xenopus laevis (African clawed frog).